We begin with the raw amino-acid sequence, 466 residues long: 3-isopropylmalate dehydratase large subunit (466 aa).

Residues cysteine 347, cysteine 407, and cysteine 410 each contribute to the [4Fe-4S] cluster site.

Belongs to the aconitase/IPM isomerase family. LeuC type 1 subfamily. In terms of assembly, heterodimer of LeuC and LeuD. The cofactor is [4Fe-4S] cluster.

The catalysed reaction is (2R,3S)-3-isopropylmalate = (2S)-2-isopropylmalate. The protein operates within amino-acid biosynthesis; L-leucine biosynthesis; L-leucine from 3-methyl-2-oxobutanoate: step 2/4. Its function is as follows. Catalyzes the isomerization between 2-isopropylmalate and 3-isopropylmalate, via the formation of 2-isopropylmaleate. This Pectobacterium atrosepticum (strain SCRI 1043 / ATCC BAA-672) (Erwinia carotovora subsp. atroseptica) protein is 3-isopropylmalate dehydratase large subunit.